The following is a 264-amino-acid chain: Methionine aminopeptidase (264 aa).

His-79 is a substrate binding site. Residues Asp-97, Asp-108, and His-171 each contribute to the a divalent metal cation site. Substrate is bound at residue His-178. A divalent metal cation-binding residues include Glu-204 and Glu-235.

Belongs to the peptidase M24A family. Methionine aminopeptidase type 1 subfamily. Monomer. Co(2+) is required as a cofactor. Requires Zn(2+) as cofactor. The cofactor is Mn(2+). Fe(2+) serves as cofactor.

The enzyme catalyses Release of N-terminal amino acids, preferentially methionine, from peptides and arylamides.. Its function is as follows. Removes the N-terminal methionine from nascent proteins. The N-terminal methionine is often cleaved when the second residue in the primary sequence is small and uncharged (Met-Ala-, Cys, Gly, Pro, Ser, Thr, or Val). Requires deformylation of the N(alpha)-formylated initiator methionine before it can be hydrolyzed. This chain is Methionine aminopeptidase, found in Buchnera aphidicola subsp. Acyrthosiphon pisum (strain APS) (Acyrthosiphon pisum symbiotic bacterium).